The primary structure comprises 329 residues: DNA-directed RNA polymerase subunit alpha (329 aa).

Residues M1–R235 are alpha N-terminal domain (alpha-NTD). An alpha C-terminal domain (alpha-CTD) region spans residues F249–E329.

It belongs to the RNA polymerase alpha chain family. As to quaternary structure, homodimer. The RNAP catalytic core consists of 2 alpha, 1 beta, 1 beta' and 1 omega subunit. When a sigma factor is associated with the core the holoenzyme is formed, which can initiate transcription.

The enzyme catalyses RNA(n) + a ribonucleoside 5'-triphosphate = RNA(n+1) + diphosphate. Its function is as follows. DNA-dependent RNA polymerase catalyzes the transcription of DNA into RNA using the four ribonucleoside triphosphates as substrates. This is DNA-directed RNA polymerase subunit alpha from Sodalis glossinidius (strain morsitans).